The chain runs to 302 residues: Pathogenicity locus probable regulatory protein HrpS (302 aa).

The Sigma-54 factor interaction domain maps to aspartate 9–leucine 237. ATP contacts are provided by residues glycine 37–aspartate 44 and alanine 99–glutamate 108. A DNA-binding region (H-T-H motif) is located at residues isoleucine 279–lysine 298.

Regulates the activation of the sigma factor HrpL which itself induces the expression of hprD as well as other hrp loci which are involved in plant pathogenicity, hrmA and avr genes. Probably interacts with sigma-54. The polypeptide is Pathogenicity locus probable regulatory protein HrpS (hrpS) (Pseudomonas syringae pv. syringae).